The primary structure comprises 38 residues: Photosystem II reaction center protein L (38 aa).

A helical transmembrane segment spans residues 17-37; the sequence is SLYWGLLLIFVLAVLFSNYFF.

Belongs to the PsbL family. As to quaternary structure, PSII is composed of 1 copy each of membrane proteins PsbA, PsbB, PsbC, PsbD, PsbE, PsbF, PsbH, PsbI, PsbJ, PsbK, PsbL, PsbM, PsbT, PsbX, PsbY, PsbZ, Psb30/Ycf12, at least 3 peripheral proteins of the oxygen-evolving complex and a large number of cofactors. It forms dimeric complexes.

The protein localises to the plastid. It localises to the chloroplast thylakoid membrane. Functionally, one of the components of the core complex of photosystem II (PSII). PSII is a light-driven water:plastoquinone oxidoreductase that uses light energy to abstract electrons from H(2)O, generating O(2) and a proton gradient subsequently used for ATP formation. It consists of a core antenna complex that captures photons, and an electron transfer chain that converts photonic excitation into a charge separation. This subunit is found at the monomer-monomer interface and is required for correct PSII assembly and/or dimerization. This chain is Photosystem II reaction center protein L, found in Gnetum gnemon (Spanish joint-fir).